A 158-amino-acid polypeptide reads, in one-letter code: Small ribosomal subunit protein uS15 (158 aa).

Basic residues predominate over residues 1–10; it reads MARMHTRRRG. The interval 1-66 is disordered; it reads MARMHTRRRG…EGVKGTPIPD (66 aa). Over residues 21-32 the composition is skewed to acidic residues; that stretch reads DPPEWSDIDADA. Residues 33 to 45 show a composition bias toward basic and acidic residues; the sequence is IEERVVELAEQGH.

This sequence belongs to the universal ribosomal protein uS15 family. Part of the 30S ribosomal subunit.

The protein is Small ribosomal subunit protein uS15 of Haloquadratum walsbyi (strain DSM 16790 / HBSQ001).